The following is a 479-amino-acid chain: Phosphoglycerate kinase, glycosomal (479 aa).

Residues Val23, Asp24, Phe25, Asn26, Arg39, Ser61, His62, Gly64, Arg65, Arg132, His168, and Arg169 each contribute to the (2R)-3-phosphoglycerate site. ADP contacts are provided by Gly214 and Ala215. Residue Gly214 coordinates CDP. Residues Ala215 and Lys216 each contribute to the AMP site. Ala215 provides a ligand contact to ATP. Mg(2+) is bound at residue Ala215. (2R)-3-phosphoglycerate is bound at residue Lys216. Residue Asp219 participates in CDP binding. Asp219 is a Mg(2+) binding site. ADP-binding residues include Lys220 and Gly238. Lys220 is an AMP binding site. Lys220 contacts ATP. Gly238 contacts CDP. AMP is bound by residues Ala239 and Ala311. Positions 239 and 311 each coordinate ATP. Residues Ala311 and Asn335 each coordinate ADP. The CDP site is built by Gly336 and Phe341. ADP is bound by residues Phe341, Glu342, Asp374, and Thr375. An AMP-binding site is contributed by Glu342. 3 residues coordinate ATP: Glu342, Asp374, and Thr375. Residue Asp374 participates in Mg(2+) binding.

The protein belongs to the phosphoglycerate kinase family. Monomer. The cofactor is Mg(2+).

It localises to the glycosome. It catalyses the reaction (2R)-3-phosphoglycerate + ATP = (2R)-3-phospho-glyceroyl phosphate + ADP. It functions in the pathway carbohydrate degradation; glycolysis; pyruvate from D-glyceraldehyde 3-phosphate: step 2/5. In Leishmania mexicana, this protein is Phosphoglycerate kinase, glycosomal (PGKC).